Consider the following 540-residue polypeptide: Hexose transporter HXT14 (540 aa).

At Met1–Ser56 the chain is on the cytoplasmic side. The helical transmembrane segment at Leu57–Trp76 threads the bilayer. Topologically, residues Asp77–Gly119 are extracellular. Residues Leu120–Gly140 form a helical membrane-spanning segment. Residues Asp141–Lys146 are Cytoplasmic-facing. Residues Gly147–Tyr167 traverse the membrane as a helical segment. Residues Gly168–Arg177 are Extracellular-facing. The chain crosses the membrane as a helical span at residues Ala178–Asn198. The Cytoplasmic portion of the chain corresponds to Ser199–Arg204. A helical membrane pass occupies residues Gly205–Leu225. Residues Asn226–Gln243 lie on the Extracellular side of the membrane. The helical transmembrane segment at Leu244–Pro264 threads the bilayer. Residues Glu265–Ile357 lie on the Cytoplasmic side of the membrane. The helical transmembrane segment at Asn358–Lys374 threads the bilayer. Over Asp375 to Ser380 the chain is Extracellular. Residues Ile381–Val398 form a helical membrane-spanning segment. At Glu399–Thr405 the chain is on the cytoplasmic side. The helical transmembrane segment at Cys406 to Thr426 threads the bilayer. Topologically, residues Phe427–Ile440 are extracellular. A helical transmembrane segment spans residues Val441–Val461. Topologically, residues Ser462–Thr478 are cytoplasmic. The chain crosses the membrane as a helical span at residues Phe479–Ile499. Asp500 is a topological domain (extracellular). A helical transmembrane segment spans residues Phe501 to Leu521. At Val522 to Glu540 the chain is on the cytoplasmic side.

This sequence belongs to the major facilitator superfamily. Sugar transporter (TC 2.A.1.1) family.

Its subcellular location is the membrane. In terms of biological role, probable glucose transporter. The sequence is that of Hexose transporter HXT14 (HXT14) from Saccharomyces cerevisiae (strain ATCC 204508 / S288c) (Baker's yeast).